The sequence spans 669 residues: 5-taurinomethyluridine-[tRNA] synthase subunit MTO1, mitochondrial (669 aa).

A mitochondrion-targeting transit peptide spans 1–25 (MFLLRGRGHWAAASLGRRLPLRRLR). Residues 42 to 47 (GGGHAG), valine 154, serine 217, and glutamine 406 contribute to the FAD site. Position 507 is an N6-methyllysine (lysine 507).

It belongs to the MnmG family. In terms of assembly, homodimer; forms a dimer in the presence of potassium. Interacts with GTPBP3; forms the GTPBP3-MTO1 complex composed of homodimers of GTPBP3 and MTO1. FAD serves as cofactor. As to expression, ubiquitously expressed in various tissues, but with markedly elevated expression in tissues of high metabolic rates.

It localises to the mitochondrion. It carries out the reaction 5,10-methylenetetrahydrofolate + uridine(34) in tRNA + taurine + GTP + A + H2O = 5-taurinomethyluridine(34) in tRNA + 7,8-dihydrofolate + GDP + AH2 + phosphate + H(+). Its function is as follows. Component of the GTPBP3-MTO1 complex that catalyzes the 5-taurinomethyluridine (taum(5)U) modification at the 34th wobble position (U34) of mitochondrial tRNAs (mt-tRNAs), which plays a role in mt-tRNA decoding and mitochondrial translation. Taum(5)U formation on mammalian mt-tRNA requires the presence of both GTPBP3-mediated GTPase activity and MTO1 catalytic activity. This is 5-taurinomethyluridine-[tRNA] synthase subunit MTO1, mitochondrial from Mus musculus (Mouse).